Here is a 206-residue protein sequence, read N- to C-terminus: Glycerol-3-phosphate acyltransferase (206 aa).

Helical transmembrane passes span 4-24, 53-73, 86-106, 116-136, 137-157, and 160-180; these read TAFA…AVIV, LAAA…VALA, GIAL…FFGF, VGIL…TWLF, MAFV…LAPV, and FFIL…AIVV.

Belongs to the PlsY family. Probably interacts with PlsX.

It localises to the cell inner membrane. It carries out the reaction an acyl phosphate + sn-glycerol 3-phosphate = a 1-acyl-sn-glycero-3-phosphate + phosphate. The protein operates within lipid metabolism; phospholipid metabolism. Catalyzes the transfer of an acyl group from acyl-phosphate (acyl-PO(4)) to glycerol-3-phosphate (G3P) to form lysophosphatidic acid (LPA). This enzyme utilizes acyl-phosphate as fatty acyl donor, but not acyl-CoA or acyl-ACP. This Chromobacterium violaceum (strain ATCC 12472 / DSM 30191 / JCM 1249 / CCUG 213 / NBRC 12614 / NCIMB 9131 / NCTC 9757 / MK) protein is Glycerol-3-phosphate acyltransferase.